A 249-amino-acid polypeptide reads, in one-letter code: Probable septum site-determining protein MinC (249 aa).

A disordered region spans residues 115 to 144 (PTAVSPPPPPPPPPARAEPAPPAARPAPGR). A compositionally biased stretch (pro residues) spans 118 to 139 (VSPPPPPPPPPARAEPAPPAAR).

This sequence belongs to the MinC family. Interacts with MinD and FtsZ.

Cell division inhibitor that blocks the formation of polar Z ring septums. Rapidly oscillates between the poles of the cell to destabilize FtsZ filaments that have formed before they mature into polar Z rings. Prevents FtsZ polymerization. This Xanthomonas axonopodis pv. citri (strain 306) protein is Probable septum site-determining protein MinC.